The sequence spans 511 residues: Mesoderm induction early response protein 1 (511 aa).

Over residues 1–16 the composition is skewed to low complexity; sequence MAEPSVESSSPGGSAT. The disordered stretch occupies residues 1-171; the sequence is MAEPSVESSS…EEESEEDEDY (171 aa). Position 10 is a phosphoserine (serine 10). Over residues 17–36 the composition is skewed to basic and acidic residues; the sequence is SEDHEFDPSADMLVHDFDDE. The segment covering 37-46 has biased composition (acidic residues); it reads RTLEEEEMME. Residues 57 to 66 are compositionally biased toward basic and acidic residues; it reads DLAREGDMPI. Over residues 83–104 the composition is skewed to acidic residues; the sequence is EEEEEEEEEEEGEDDEDADNDD. Positions 128–143 are enriched in polar residues; that stretch reads QSSNDDPSQSVTSQDA. Serine 140 bears the Phosphoserine mark. Tyrosine 154 carries the post-translational modification Phosphotyrosine. Phosphoserine is present on residues serine 159 and serine 165. The segment covering 159–171 has biased composition (acidic residues); that stretch reads SEIEEESEEDEDY. In terms of domain architecture, ELM2 spans 179–277; that stretch reads KEIMVGSMFQ…EALRRLRFNV (99 aa). Lysine 238 participates in a covalent cross-link: Glycyl lysine isopeptide (Lys-Gly) (interchain with G-Cter in SUMO2). The 53-residue stretch at 282–334 folds into the SANT domain; it reads EELSVWTEEECRNFEQGLKAYGKDFHLIQANKVRTRSVGECVAFYYMWKKSER. Residues 365–511 are disordered; the sequence is ESESAASSRA…KFEEHENTND (147 aa). A phosphoserine mark is found at serine 366, serine 368, and serine 376. A compositionally biased stretch (polar residues) spans 397–408; it reads SSRNQNGVSSNG. 2 stretches are compositionally biased toward basic and acidic residues: residues 413–422 and 461–474; these read LNKEEVKVEG and ARNENDFDEKNERP. Residue lysine 419 forms a Glycyl lysine isopeptide (Lys-Gly) (interchain with G-Cter in SUMO2) linkage. The span at 481-493 shows a compositional bias: polar residues; that stretch reads NSSGKESPGSSEF. A phosphoserine mark is found at serine 482, serine 487, and serine 490. Over residues 499 to 511 the composition is skewed to basic and acidic residues; it reads SHGKFEEHENTND.

Interacts with HDAC1. Part of a complex containing at least CDYL, MIER1, MIER2, HDAC1 and HDAC2. As to expression, ubiquitously expressed. Isoform 1 is only expressed in testis.

It is found in the nucleus. Transcriptional repressor regulating the expression of a number of genes including SP1 target genes. Probably functions through recruitment of HDAC1 a histone deacetylase involved in chromatin silencing. This is Mesoderm induction early response protein 1 (Mier1) from Mus musculus (Mouse).